The primary structure comprises 84 residues: Large ribosomal subunit protein bL27c (84 aa).

Residues Met1–Val23 are disordered.

The protein belongs to the bacterial ribosomal protein bL27 family.

It is found in the plastid. Its subcellular location is the chloroplast. This Thalassiosira pseudonana (Marine diatom) protein is Large ribosomal subunit protein bL27c.